Consider the following 61-residue polypeptide: Large ribosomal subunit protein bL28 (61 aa).

A disordered region spans residues 1-26; that stretch reads MAKDYVTGKRTHFGNTRSHALNHSRR.

This sequence belongs to the bacterial ribosomal protein bL28 family.

This chain is Large ribosomal subunit protein bL28, found in Lactiplantibacillus plantarum (strain ATCC BAA-793 / NCIMB 8826 / WCFS1) (Lactobacillus plantarum).